We begin with the raw amino-acid sequence, 348 residues long: Oxygen-dependent coproporphyrinogen-III oxidase (348 aa).

S104 serves as a coordination point for substrate. A divalent metal cation-binding residues include H108 and H118. Catalysis depends on H118, which acts as the Proton donor. A substrate-binding site is contributed by N120–R122. The a divalent metal cation site is built by H152 and H182. Positions Y272–E307 are important for dimerization.

The protein belongs to the aerobic coproporphyrinogen-III oxidase family. Homodimer. A divalent metal cation serves as cofactor.

It is found in the cytoplasm. The enzyme catalyses coproporphyrinogen III + O2 + 2 H(+) = protoporphyrinogen IX + 2 CO2 + 2 H2O. Its pathway is porphyrin-containing compound metabolism; protoporphyrin-IX biosynthesis; protoporphyrinogen-IX from coproporphyrinogen-III (O2 route): step 1/1. In terms of biological role, involved in the heme and chlorophyll biosynthesis. Catalyzes the aerobic oxidative decarboxylation of propionate groups of rings A and B of coproporphyrinogen-III to yield the vinyl groups in protoporphyrinogen-IX. This Prochlorococcus marinus (strain NATL2A) protein is Oxygen-dependent coproporphyrinogen-III oxidase.